Consider the following 232-residue polypeptide: Ribonuclease P protein component 3 (232 aa).

Belongs to the eukaryotic/archaeal RNase P protein component 3 family. Consists of a catalytic RNA component and at least 4-5 protein subunits.

It localises to the cytoplasm. The enzyme catalyses Endonucleolytic cleavage of RNA, removing 5'-extranucleotides from tRNA precursor.. In terms of biological role, part of ribonuclease P, a protein complex that generates mature tRNA molecules by cleaving their 5'-ends. This Methanococcus maripaludis (strain C6 / ATCC BAA-1332) protein is Ribonuclease P protein component 3.